A 155-amino-acid polypeptide reads, in one-letter code: Protein-export protein SecB 1 (155 aa).

Belongs to the SecB family. Homotetramer, a dimer of dimers. One homotetramer interacts with 1 SecA dimer.

The protein resides in the cytoplasm. Functionally, one of the proteins required for the normal export of preproteins out of the cell cytoplasm. It is a molecular chaperone that binds to a subset of precursor proteins, maintaining them in a translocation-competent state. It also specifically binds to its receptor SecA. This is Protein-export protein SecB 1 from Polaromonas naphthalenivorans (strain CJ2).